The sequence spans 682 residues: Potassium-transporting ATPase ATP-binding subunit (682 aa).

The next 4 helical transmembrane spans lie at 35 to 55 (VMFVVWLGSVVTTLLAVAMAA), 62 to 82 (TGFTVAISVWLWFTVLFANFA), 219 to 239 (IALTILLLALTIVLLLATVTL), and 254 to 274 (VLVALLVCLIPTTIGGLLSAI). Asp307 acts as the 4-aspartylphosphate intermediate in catalysis. ATP is bound by residues Asp344, Glu348, 377-384 (FSAQTRMS), and Lys395. Residues Asp518 and Asp522 each contribute to the Mg(2+) site. The next 3 helical transmembrane spans lie at 577–597 (TFSIANDVAKYFAILPAAFAA), 616–636 (AILSAVIFNALVIVFLIPLAL), and 656–676 (IYGVGGLLVPFLGIKLIDMLL).

Belongs to the cation transport ATPase (P-type) (TC 3.A.3) family. Type IA subfamily. As to quaternary structure, the system is composed of three essential subunits: KdpA, KdpB and KdpC.

It is found in the cell inner membrane. It catalyses the reaction K(+)(out) + ATP + H2O = K(+)(in) + ADP + phosphate + H(+). Functionally, part of the high-affinity ATP-driven potassium transport (or Kdp) system, which catalyzes the hydrolysis of ATP coupled with the electrogenic transport of potassium into the cytoplasm. This subunit is responsible for energy coupling to the transport system and for the release of the potassium ions to the cytoplasm. This chain is Potassium-transporting ATPase ATP-binding subunit, found in Erwinia tasmaniensis (strain DSM 17950 / CFBP 7177 / CIP 109463 / NCPPB 4357 / Et1/99).